The chain runs to 414 residues: Probable isoprenylcysteine alpha-carbonyl methylesterase ICME (414 aa).

A disordered region spans residues 1 to 54; that stretch reads MQPASPVSGDAGPVAEAVPPRGAPQVLVRRRSVPFSPDSPLAPGSRGGGERRST. Helical transmembrane passes span 90–110 and 145–165; these read LAALIIYAILLMPGFIRVGYY and VVAFVTGGAWIIGYKAWGALL. Residues 151–153 and 222–224 contribute to the substrate site; these read GGA and QSA. Catalysis depends on residues S223, D323, and H355.

Belongs to the AB hydrolase superfamily. Isoprenylcysteine methylesterase family.

Its subcellular location is the endoplasmic reticulum membrane. It localises to the golgi apparatus membrane. It carries out the reaction [protein]-C-terminal S-[(2E,6E)-farnesyl]-L-cysteine methyl ester + H2O = [protein]-C-terminal S-[(2E,6E)-farnesyl]-L-cysteine + methanol + H(+). In terms of biological role, catalyzes the demethylation of isoprenylcysteine methylesters. The sequence is that of Probable isoprenylcysteine alpha-carbonyl methylesterase ICME (IMCE) from Oryza sativa subsp. japonica (Rice).